Consider the following 135-residue polypeptide: MQYGAAAAEQAWYMPAAAMVVAAAAETAAERVERLASESAVVVFSVSSCCMCHAVKRLFCGMGVHPAVHELDLDPRGRDLERALARLVGAGGAAAAAVPVVFIGGKLVGAMDRVMAAHINGSLVPLLKEAGALWL.

The 106-residue stretch at 29-134 (AERVERLASE…PLLKEAGALW (106 aa)) folds into the Glutaredoxin domain. Cysteine 49 and cysteine 52 are joined by a disulfide. The Responsive for interaction with TGA factors signature appears at 132-135 (ALWL).

This sequence belongs to the glutaredoxin family. CC-type subfamily.

Its subcellular location is the cytoplasm. The protein localises to the nucleus. Has a glutathione-disulfide oxidoreductase activity in the presence of NADPH and glutathione reductase. Reduces low molecular weight disulfides and proteins. The polypeptide is Glutaredoxin-C5 (GRXC5) (Oryza sativa subsp. japonica (Rice)).